The sequence spans 164 residues: Endoribonuclease YbeY (164 aa).

Zn(2+) is bound by residues histidine 111, histidine 115, and histidine 121. The tract at residues 140 to 164 (ELGHPDPYADDDAQKHSTVTIKDSE) is disordered. The segment covering 155 to 164 (HSTVTIKDSE) has biased composition (polar residues).

It belongs to the endoribonuclease YbeY family. The cofactor is Zn(2+).

Its subcellular location is the cytoplasm. Functionally, single strand-specific metallo-endoribonuclease involved in late-stage 70S ribosome quality control and in maturation of the 3' terminus of the 16S rRNA. The chain is Endoribonuclease YbeY from Pseudomonas fluorescens (strain SBW25).